A 68-amino-acid chain; its full sequence is Protein VNG_1110C (68 aa).

This is Protein VNG_1110C from Halobacterium salinarum (strain ATCC 700922 / JCM 11081 / NRC-1) (Halobacterium halobium).